Consider the following 530-residue polypeptide: TNF receptor-associated factor 6 (530 aa).

The segment at 1 to 362 is interaction with TAX1BP1; that stretch reads MSLLNCENSC…EAQQCNGIYI (362 aa). Residues 70-109 form an RING-type; degenerate zinc finger; it reads CPICLMALREAVQTPCGHRFCKACITKSIRDAGHKCPVDN. K124 is covalently cross-linked (Glycyl lysine isopeptide (Lys-Gly) (interchain with G-Cter in SUMO); alternate). A Glycyl lysine isopeptide (Lys-Gly) (interchain with G-Cter in ubiquitin); alternate cross-link involves residue K124. A Glycyl lysine isopeptide (Lys-Gly) (interchain with G-Cter in SUMO) cross-link involves residue K142. 2 TRAF-type zinc fingers span residues 150–202 and 203–259; these read DHQV…EEKE and IHDQ…NHLA. Residues 302–356 are a coiled coil; sequence NYEETVKQLEGRLVRQDHQIRELTAKMETQSMHVSELKRTIRSLEDKVAEMEAQQ. Residue K327 forms a Glycyl lysine isopeptide (Lys-Gly) (interchain with G-Cter in ubiquitin) linkage. Residues 358 to 507 enclose the MATH domain; the sequence is NGIYIWKIGN…DDTLLVRCEV (150 aa). The interaction with TANK stretch occupies residues 363–530; that stretch reads WKIGNFGMHL…FQPRSTDAGV (168 aa). A Glycyl lysine isopeptide (Lys-Gly) (interchain with G-Cter in SUMO) cross-link involves residue K461.

The protein belongs to the TNF receptor-associated factor family. A subfamily. As to quaternary structure, homotrimer. Homooligomer. N-terminal region is dimeric while C-terminal region is trimeric; maybe providing a mode of oligomerization. Upon IL1B treatment, forms a complex with PELI1, IRAK1, IRAK4 and MYD88; this complex recruits MAP3K7/TAK1, TAB1 and TAB2 to mediate NF-kappa-B activation. Direct binding of SMAD6 to PELI1 prevents the complex formation and hence negatively regulates IL1R-TLR signaling and eventually NF-kappa-B-mediated gene expression. Binds to TNFRSF5/CD40 and TNFRSF11A/RANK. Associates with NGFR, TNFRSF17, IRAK2, IRAK3, RIPK2, MAP3K1, MAP3K5, MAP3K14, CSK, TRAF, TRAF-interacting protein TRIP and TNF receptor associated protein TDP2. Interacts with IL17R. Interacts with SQSTM1 bridging NTRK1 and NGFR. Forms a ternary complex with SQSTM1 and PRKCZ. Interacts with PELI2 and PELI3. Binds UBE2V1. Interacts with TAX1BP1; this interaction mediates deubiquitination of TRAF6 and inhibition of NF-kappa-B activation. Interacts with ZNF675. Interacts with ARRB1 and ARRB2. Interacts with MAP3K7 and TAB1/MAP3K7IP1; during IL-1 signaling. Interacts with UBE2N. Interacts with TGFBR1, HDAC1 and RANGAP1. Interacts with AKT1, AKT2 and AKT3. Interacts (via TRAF domains) with NUMBL (via C-terminal). Interacts with RBCK1. Interacts with LIMD1 (via LIM domains). Interacts with RSAD2/viperin. Interacts (via C-terminus) with EIF2AK2/PKR (via the kinase catalytic domain). Interacts with ZFAND5. Interacts with IL1RL1. Interacts with TRAFD1. Interacts with AJUBA. Interacts with MAVS/IPS1. Interacts (via TRAF domains) with DYNC2I2 (via WD domains). Interacts with IFIT3 (via N-terminus). Interacts with TICAM2. Interacts with CARD14. Interacts with CD40 and MAP3K8; the interaction is required for ERK activation. Interacts with TICAM1 and this interaction is enhanced in the presence of WDFY1. Interacts with TANK; this interaction increases in response to DNA damage. Interacts with USP10; this interaction increases in response to DNA damage. Interacts with ZC3H12A; this interaction increases in response to DNA damage and is stimulated by TANK. Interacts with WDFY3. Interacts with TRIM13. Interacts with GPS2. Interacts (via C-terminus) with SASH1. Interacts with LRRC19. Interacts with IL17RA and TRAF3IP2. Interacts with TOMM70. Interacts with AMBRA1; interaction is required to mediate 'Lys-63'-linked ubiquitination of ULK1. Interacts with CRBN; this interaction inhibits TLR4-mediated signaling by preventing TRAF6-mediated ubiquitination of ECSIT. In terms of processing, sumoylated on Lys-124, Lys-142 and Lys-461 with SUMO1. Post-translationally, polyubiquitinated on Lys-124 by TRAF3IP2; after cell stimulation with IL17A. Polyubiquitinated; after cell stimulation with IL1B or TGFB. This ligand-induced cell stimulation leads to dimerization/oligomerization of TRAF6 molecules, followed by auto-ubiquitination which involves UBE2N and UBE2V1 and leads to TRAF6 activation. This 'Lys-63' site-specific poly-ubiquitination appears to be associated with the activation of signaling molecules. Endogenous autoubiquitination occurs only for the cytoplasmic form. Deubiquitinated by USP10 in a TANK-dependent manner, leading to the negative regulation of NF-kappa-B signaling upon DNA damage. LRRC19 induces 'Lys-63' ubiquitination. Ubiquitinated at Lys-327 by the SCF(FBXL2) complex, leading to its degradation by the proteasome.

It is found in the cytoplasm. The protein localises to the cell cortex. The protein resides in the nucleus. It localises to the lipid droplet. It carries out the reaction S-ubiquitinyl-[E2 ubiquitin-conjugating enzyme]-L-cysteine + [acceptor protein]-L-lysine = [E2 ubiquitin-conjugating enzyme]-L-cysteine + N(6)-ubiquitinyl-[acceptor protein]-L-lysine.. It functions in the pathway protein modification; protein ubiquitination. E3 ubiquitin ligase that, together with UBE2N and UBE2V1, mediates the synthesis of 'Lys-63'-linked-polyubiquitin chains conjugated to proteins, such as ECSIT, IKBKG, IRAK1, AKT1 and AKT2. Also mediates ubiquitination of free/unanchored polyubiquitin chain that leads to MAP3K7 activation. Leads to the activation of NF-kappa-B and JUN. Seems to also play a role in dendritic cells (DCs) maturation and/or activation. Represses c-Myb-mediated transactivation, in B-lymphocytes. Adapter protein that seems to play a role in signal transduction initiated via TNF receptor, IL-1 receptor and IL-17 receptor. Regulates osteoclast differentiation by mediating the activation of adapter protein complex 1 (AP-1) and NF-kappa-B, in response to RANK-L stimulation. Together with MAP3K8, mediates CD40 signals that activate ERK in B-cells and macrophages, and thus may play a role in the regulation of immunoglobulin production. Acts as a regulator of the JNK and NF-kappa-B signaling pathways by initiating assembly of heterotypic 'Lys-63'-/'Lys-48'-linked branched ubiquitin chains that are then recognized by TAB2: TRAF6 catalyzes initial 'Lys-63'-linked-polyubiquitin chains that are then branched via 'Lys-48'-linked polyubiquitin by HUWE1. 'Lys-63'-/'Lys-48'-linked branched ubiquitin chains protect 'Lys-63'-linkages from CYLD deubiquitination. Also participates in the TCR signaling by ubiquitinating LAT. This chain is TNF receptor-associated factor 6 (Traf6), found in Rattus norvegicus (Rat).